Here is a 125-residue protein sequence, read N- to C-terminus: MRRNGKEGKDRAPGRPQRKGQEVASRPWIFRGLDRNRVTAKNILWHELIGLKAKIIRASHPELVGIEGYVLDETRNTLTICGERVWVIPKDVVELEFEVGDKRIRINGRELIGRPEMRLKKRWRR.

Positions 1-13 (MRRNGKEGKDRAP) are enriched in basic and acidic residues. Residues 1 to 24 (MRRNGKEGKDRAPGRPQRKGQEVA) form a disordered region.

Belongs to the eukaryotic/archaeal RNase P protein component 1 family. As to quaternary structure, consists of a catalytic RNA component and at least 4-5 protein subunits.

The protein localises to the cytoplasm. The catalysed reaction is Endonucleolytic cleavage of RNA, removing 5'-extranucleotides from tRNA precursor.. Part of ribonuclease P, a protein complex that generates mature tRNA molecules by cleaving their 5'-ends. The chain is Ribonuclease P protein component 1 from Thermococcus onnurineus (strain NA1).